We begin with the raw amino-acid sequence, 504 residues long: Sodium/proline symporter (504 aa).

Transmembrane regions (helical) follow at residues 8 to 28 (LITFTIYIFGMLLIGVLAYYY), 50 to 70 (SAGASDMSGWLLMGLPGAVYL), 73 to 93 (LVEGWIAIGLTIGAYFNWLLV), 127 to 147 (LVSATIILVFLTIYCASGVVA), 163 to 183 (ALWYGAAATIAYTFIGGFLAV), 189 to 209 (IQATLMIFALILTPVFVLLSF), 240 to 260 (LGLLSLAAWGLGYFGQPHILA), 281 to 301 (WMVLCLAGAIGIGLFAIPYFF), 324 to 344 (LLFNPWIAGILLSAILAAVMS), 374 to 394 (ELVWLGRIMVLVIAALAIWIA), 405 to 425 (VEFAWAGFGSAFGPVVLFSLF), 434 to 454 (AMAGMLVGAVTVFAWKEVVPA), and 461 to 481 (VYEMIPGFAFASLAIIVISLL).

The protein belongs to the sodium:solute symporter (SSF) (TC 2.A.21) family.

Its subcellular location is the cell inner membrane. The catalysed reaction is L-proline(in) + Na(+)(in) = L-proline(out) + Na(+)(out). Its function is as follows. Catalyzes the sodium-dependent uptake of extracellular L-proline. The sequence is that of Sodium/proline symporter (putP) from Haemophilus influenzae (strain ATCC 51907 / DSM 11121 / KW20 / Rd).